A 1210-amino-acid chain; its full sequence is Epidermal growth factor receptor (1210 aa).

Residues 1 to 24 (MRPSGTAGAALLALLAALCPASRA) form the signal peptide. The Extracellular portion of the chain corresponds to 25–645 (LEEKKVCQGT…CARNGPKIPS (621 aa)). An intrachain disulfide couples C31 to C58. One copy of the Approximate repeat lies at 75-300 (DLSFLKTIQE…CVKKCPRNYV (226 aa)). N128, N175, and N196 each carry an N-linked (GlcNAc...) asparagine glycan. Disulfide bonds link C157/C187, C190/C199, C194/C207, C215/C223, C219/C231, C232/C240, C236/C248, C251/C260, C264/C291, C295/C307, C311/C326, C329/C333, and C337/C362. S229 carries the phosphoserine modification. N352, N361, N413, and N444 each carry an N-linked (GlcNAc...) asparagine glycan. Residues 390 to 600 (QELDILKTVK…CVKTCPAGVM (211 aa)) form an Approximate repeat. Intrachain disulfides connect C470-C499, C506-C515, C510-C523, C526-C535, C539-C555, C558-C571, C562-C579, C582-C591, C595-C617, C620-C628, and C624-C636. An N-linked (GlcNAc...) asparagine glycan is attached at N528. Residue N568 is glycosylated (N-linked (GlcNAc...) asparagine). The N-linked (GlcNAc...) asparagine glycan is linked to N603. A helical membrane pass occupies residues 646-668 (IATGMVGALLLLLVVALGIGLFM). Residues 669-1210 (RRRHIVRKRT…APQSSEFIGA (542 aa)) lie on the Cytoplasmic side of the membrane. Residue T678 is modified to Phosphothreonine; by PKC and PKD/PRKD1. Residues 688 to 704 (LVEPLTPSGEAPNQALL) form an important for dimerization, phosphorylation and activation region. Residue T693 is modified to Phosphothreonine; by PKD/PRKD1. A Phosphoserine modification is found at S695. The Protein kinase domain maps to 712-979 (FKKIKVLGSG…KMARDPQRYL (268 aa)). K716 participates in a covalent cross-link: Glycyl lysine isopeptide (Lys-Gly) (interchain with G-Cter in ubiquitin). 718-726 (LGSGAFGTV) contacts ATP. A Glycyl lysine isopeptide (Lys-Gly) (interchain with G-Cter in ubiquitin) cross-link involves residue K737. K745 lines the ATP pocket. N6-(2-hydroxyisobutyryl)lysine is present on K745. Glycyl lysine isopeptide (Lys-Gly) (interchain with G-Cter in ubiquitin) cross-links involve residues K754 and K757. 790 to 791 (TQ) lines the ATP pocket. D837 acts as the Proton acceptor in catalysis. D855 provides a ligand contact to ATP. K867 is covalently cross-linked (Glycyl lysine isopeptide (Lys-Gly) (interchain with G-Cter in ubiquitin)). Y869 carries the phosphotyrosine modification. Residues K929, K960, and K970 each participate in a glycyl lysine isopeptide (Lys-Gly) (interchain with G-Cter in ubiquitin) cross-link. 2 positions are modified to phosphoserine: S991 and S995. 2 positions are modified to phosphotyrosine; by autocatalysis: Y998 and Y1016. Residues S1026 and S1039 each carry the phosphoserine modification. At T1041 the chain carries Phosphothreonine. Position 1042 is a phosphoserine (S1042). C1049 carries S-palmitoyl cysteine lipidation. Phosphoserine is present on S1064. Phosphotyrosine is present on Y1069. Phosphoserine is present on residues S1070, S1071, and S1081. Phosphotyrosine; by autocatalysis is present on residues Y1092 and Y1110. The tract at residues 1097 to 1137 (VPKRPAGSVQNPVYHNQPLNPAPSRDPHYQDPHSTAVGNPE) is disordered. Polar residues-rich tracts occupy residues 1104-1115 (SVQNPVYHNQPL) and 1128-1137 (PHSTAVGNPE). A lipid anchor (S-palmitoyl cysteine) is attached at C1146. S1166 is subject to Phosphoserine. Phosphotyrosine; by autocatalysis is present on residues Y1172 and Y1197. The residue at position 1199 (R1199) is an Omega-N-methylarginine.

Belongs to the protein kinase superfamily. Tyr protein kinase family. EGF receptor subfamily. Binding of the ligand triggers homo- and/or heterodimerization of the receptor triggering its autophosphorylation. Heterodimer with ERBB2. Forms a complex with CCDC88A/GIV (via SH2-like regions) and GNAI3 which leads to enhanced EGFR signaling and triggering of cell migration; binding to CCDC88A requires autophosphorylation of the EGFR C-terminal region, and ligand stimulation is required for recruitment of GNAI3 to the complex. Interacts with ERRFI1; inhibits dimerization of the kinase domain and autophosphorylation. Part of a complex with ERBB2 and either PIK3C2A or PIK3C2B. Interacts with GRB2; an adapter protein coupling the receptor to downstream signaling pathways. Interacts with GAB2; involved in signaling downstream of EGFR. Interacts with STAT3; mediates EGFR downstream signaling in cell proliferation. Interacts with RIPK1; involved in NF-kappa-B activation. Interacts (autophosphorylated) with CBL, CBLB and CBLC; involved in EGFR ubiquitination and regulation; interaction with CBL is reduced in the presence of tensin TNS4. Interacts with SOCS5; regulates EGFR degradation through ELOC- and ELOB-mediated ubiquitination and proteasomal degradation. Interacts with PRMT5; methylates EGFR and enhances interaction with PTPN6. Interacts (phosphorylated) with PTPN6; inhibits EGFR-dependent activation of MAPK/ERK. Interacts with COPG1; essential for regulation of EGF-dependent nuclear transport of EGFR by retrograde trafficking from the Golgi to the ER. Interacts with TNK2; this interaction is dependent on EGF stimulation and kinase activity of EGFR. Interacts with PCNA; positively regulates PCNA. Interacts with PELP1. Interacts with MUC1. Interacts with AP2M1. Interacts with FER. May interact with EPS8; mediates EPS8 phosphorylation. Interacts (via SH2 domains) with GRB2, NCK1 and NCK2. Interacts with ATXN2. Interacts with GAREM1. Interacts (ubiquitinated) with ANKRD13A/B/D; the interaction is direct and may regulate EGFR internalization after EGF stimulation. Interacts with GPER1; the interaction occurs in an estrogen-dependent manner. Interacts (via C-terminal cytoplasmic kinase domain) with ZPR1 (via zinc fingers). Interacts with RNF115 and RNF126. Interacts with GPRC5A (via its transmembrane domain). Interacts with FAM83B; positively regulates EGFR inducing its autophosphorylation in absence of stimulation by EGF. Interacts with LAPTM4B; positively correlates with EGFR activation. Interacts with STX19. Interacts with CD44. Interacts with PGRMC1; the interaction requires PGRMC1 homodimerization. Interacts with PIKFYVE. Interacts with NEU3. Interacts with TRAF4. Interacts with the ant venom OMEGA-myrmeciitoxin(02)-Mg1a. Interacts with CD82; this interaction facilitates ligand-induced endocytosis of the receptor and its subsequent desensitization. In terms of processing, phosphorylated on Tyr residues in response to EGF. Phosphorylation at Ser-695 is partial and occurs only if Thr-693 is phosphorylated. Phosphorylation at Thr-678 and Thr-693 by PRKD1 inhibits EGF-induced MAPK8/JNK1 activation. Dephosphorylation by PTPRJ prevents endocytosis and stabilizes the receptor at the plasma membrane. Autophosphorylation at Tyr-1197 is stimulated by methylation at Arg-1199 and enhances interaction with PTPN6. Autophosphorylation at Tyr-1092 and/or Tyr-1110 recruits STAT3. Dephosphorylated by PTPN1 and PTPN2. Monoubiquitinated and polyubiquitinated upon EGF stimulation; which does not affect tyrosine kinase activity or signaling capacity but may play a role in lysosomal targeting. Polyubiquitin linkage is mainly through 'Lys-63', but linkage through 'Lys-48', 'Lys-11' and 'Lys-29' also occurs. Deubiquitination by OTUD7B prevents degradation. Ubiquitinated by RNF115 and RNF126. Ubiquitinated by ZNRF1 or CBL at different lysines in response to EGF stimulation; leading to recruitment of the ESCRT machinery and subsequent degradation in the lysosomes. Deubiquitinated by UCHL1 leading to the inhibition of its degradation. Post-translationally, palmitoylated on Cys residues by ZDHHC20. Palmitoylation inhibits internalization after ligand binding, and increases the persistence of tyrosine-phosphorylated EGFR at the cell membrane. Palmitoylation increases the amplitude and duration of EGFR signaling. In terms of processing, methylated. Methylation at Arg-1199 by PRMT5 stimulates phosphorylation at Tyr-1197. In terms of tissue distribution, hypothalamus.

It localises to the cell membrane. The protein resides in the endoplasmic reticulum membrane. The protein localises to the golgi apparatus membrane. It is found in the nucleus membrane. Its subcellular location is the endosome. It localises to the endosome membrane. The protein resides in the nucleus. It carries out the reaction L-tyrosyl-[protein] + ATP = O-phospho-L-tyrosyl-[protein] + ADP + H(+). Endocytosis and inhibition of the activated EGFR by phosphatases like PTPRJ and PTPRK constitute immediate regulatory mechanisms. Upon EGF-binding phosphorylates EPS15 that regulates EGFR endocytosis and activity. Moreover, inducible feedback inhibitors including LRIG1, SOCS4, SOCS5 and ERRFI1 constitute alternative regulatory mechanisms for the EGFR signaling. Functionally, receptor tyrosine kinase binding ligands of the EGF family and activating several signaling cascades to convert extracellular cues into appropriate cellular responses. Known ligands include EGF, TGFA/TGF-alpha, AREG, epigen/EPGN, BTC/betacellulin, epiregulin/EREG and HBEGF/heparin-binding EGF. Ligand binding triggers receptor homo- and/or heterodimerization and autophosphorylation on key cytoplasmic residues. The phosphorylated receptor recruits adapter proteins like GRB2 which in turn activates complex downstream signaling cascades. Activates at least 4 major downstream signaling cascades including the RAS-RAF-MEK-ERK, PI3 kinase-AKT, PLCgamma-PKC and STATs modules. May also activate the NF-kappa-B signaling cascade. Also directly phosphorylates other proteins like RGS16, activating its GTPase activity and probably coupling the EGF receptor signaling to the G protein-coupled receptor signaling. Also phosphorylates MUC1 and increases its interaction with SRC and CTNNB1/beta-catenin. Positively regulates cell migration via interaction with CCDC88A/GIV which retains EGFR at the cell membrane following ligand stimulation, promoting EGFR signaling which triggers cell migration. Plays a role in enhancing learning and memory performance. Plays a role in mammalian pain signaling (long-lasting hypersensitivity). The protein is Epidermal growth factor receptor (EGFR) of Macaca mulatta (Rhesus macaque).